Consider the following 76-residue polypeptide: Kappa-actitoxin-Avd4c (76 aa).

The N-terminal stretch at 1–19 (MNKALFLCLVVLCAAVVFA) is a signal peptide. Residues 20–31 (AEDLQKAKHAPF) constitute a propeptide that is removed on maturation. 3 disulfides stabilise this stretch: cysteine 37–cysteine 72, cysteine 39–cysteine 65, and cysteine 55–cysteine 73.

The protein belongs to the sea anemone type 3 (BDS) potassium channel toxin family. Moderately expressed in the ectodermal tissue from the distal and proximal tentacles, body wall, and oral disk.

The protein resides in the secreted. It is found in the nematocyst. Its function is as follows. Blocks Kv3 voltage-gated potassium channels. Reduces blood pressure. The protein is Kappa-actitoxin-Avd4c of Anemonia viridis (Snakelocks anemone).